The following is a 228-amino-acid chain: Cytochrome c oxidase subunit 2 (228 aa).

Over 1–14 the chain is Mitochondrial intermembrane; that stretch reads MAYPLQLGLQDASS. Residues 15–45 traverse the membrane as a helical segment; it reads PIMEELTNFHDHTLMIVFLISSLVLYLISLM. Topologically, residues 46–59 are mitochondrial matrix; that stretch reads LTTKLIHTSTMDAQ. Residues 60–87 form a helical membrane-spanning segment; that stretch reads EVETIWTILPAIILILIALPSLRILYMM. Residues 88 to 228 are Mitochondrial intermembrane-facing; sequence DEINNPVLTV…FENWSVSMTQ (141 aa). H161, C196, E198, C200, H204, and M207 together coordinate Cu cation. A Mg(2+)-binding site is contributed by E198.

Belongs to the cytochrome c oxidase subunit 2 family. Component of the cytochrome c oxidase (complex IV, CIV), a multisubunit enzyme composed of 14 subunits. The complex is composed of a catalytic core of 3 subunits MT-CO1, MT-CO2 and MT-CO3, encoded in the mitochondrial DNA, and 11 supernumerary subunits COX4I, COX5A, COX5B, COX6A, COX6B, COX6C, COX7A, COX7B, COX7C, COX8 and NDUFA4, which are encoded in the nuclear genome. The complex exists as a monomer or a dimer and forms supercomplexes (SCs) in the inner mitochondrial membrane with NADH-ubiquinone oxidoreductase (complex I, CI) and ubiquinol-cytochrome c oxidoreductase (cytochrome b-c1 complex, complex III, CIII), resulting in different assemblies (supercomplex SCI(1)III(2)IV(1) and megacomplex MCI(2)III(2)IV(2)). Found in a complex with TMEM177, COA6, COX18, COX20, SCO1 and SCO2. Interacts with TMEM177 in a COX20-dependent manner. Interacts with COX20. Interacts with COX16. Cu cation is required as a cofactor.

It localises to the mitochondrion inner membrane. It carries out the reaction 4 Fe(II)-[cytochrome c] + O2 + 8 H(+)(in) = 4 Fe(III)-[cytochrome c] + 2 H2O + 4 H(+)(out). Functionally, component of the cytochrome c oxidase, the last enzyme in the mitochondrial electron transport chain which drives oxidative phosphorylation. The respiratory chain contains 3 multisubunit complexes succinate dehydrogenase (complex II, CII), ubiquinol-cytochrome c oxidoreductase (cytochrome b-c1 complex, complex III, CIII) and cytochrome c oxidase (complex IV, CIV), that cooperate to transfer electrons derived from NADH and succinate to molecular oxygen, creating an electrochemical gradient over the inner membrane that drives transmembrane transport and the ATP synthase. Cytochrome c oxidase is the component of the respiratory chain that catalyzes the reduction of oxygen to water. Electrons originating from reduced cytochrome c in the intermembrane space (IMS) are transferred via the dinuclear copper A center (CU(A)) of subunit 2 and heme A of subunit 1 to the active site in subunit 1, a binuclear center (BNC) formed by heme A3 and copper B (CU(B)). The BNC reduces molecular oxygen to 2 water molecules using 4 electrons from cytochrome c in the IMS and 4 protons from the mitochondrial matrix. The sequence is that of Cytochrome c oxidase subunit 2 (MT-CO2) from Meriones shawi (Shaw's jird).